Here is a 564-residue protein sequence, read N- to C-terminus: NAD-dependent malic enzyme (564 aa).

Catalysis depends on Tyr102, which acts as the Proton donor. Arg155 contributes to the NAD(+) binding site. Lys173 (proton acceptor) is an active-site residue. A divalent metal cation is bound by residues Glu244, Asp245, and Asp268. NAD(+) is bound by residues Asp268 and Asn417.

The protein belongs to the malic enzymes family. In terms of assembly, homotetramer. It depends on Mg(2+) as a cofactor. Mn(2+) serves as cofactor.

The catalysed reaction is (S)-malate + NAD(+) = pyruvate + CO2 + NADH. It catalyses the reaction oxaloacetate + H(+) = pyruvate + CO2. The chain is NAD-dependent malic enzyme from Pseudomonas aeruginosa (strain UCBPP-PA14).